Reading from the N-terminus, the 474-residue chain is JmjC domain-containing protein F (474 aa).

The segment at 247-269 is disordered; that stretch reads KTKKQQQQQQTTTTTANNDNDNS. A compositionally biased stretch (low complexity) spans 251 to 261; sequence QQQQQQTTTTT. In terms of domain architecture, JmjC spans 305-474; sequence AYLAQHGLIE…LSLSFWFIKK (170 aa).

This Dictyostelium discoideum (Social amoeba) protein is JmjC domain-containing protein F (jcdF).